We begin with the raw amino-acid sequence, 694 residues long: Glycine--tRNA ligase beta subunit (694 aa).

Belongs to the class-II aminoacyl-tRNA synthetase family. As to quaternary structure, tetramer of two alpha and two beta subunits.

The protein localises to the cytoplasm. The enzyme catalyses tRNA(Gly) + glycine + ATP = glycyl-tRNA(Gly) + AMP + diphosphate. In Lactiplantibacillus plantarum (strain ATCC BAA-793 / NCIMB 8826 / WCFS1) (Lactobacillus plantarum), this protein is Glycine--tRNA ligase beta subunit.